A 263-amino-acid chain; its full sequence is Ribosomal RNA large subunit methyltransferase E (263 aa).

Positions 1-34 are disordered; the sequence is MSSAEGPKSGGGSKGSKSEASSRVRGSAPTGSRD. S-adenosyl-L-methionine is bound by residues Gly102, Trp104, Asp126, Asp142, and Asp166. Lys206 acts as the Proton acceptor in catalysis.

The protein belongs to the class I-like SAM-binding methyltransferase superfamily. RNA methyltransferase RlmE family.

It localises to the cytoplasm. It catalyses the reaction uridine(2552) in 23S rRNA + S-adenosyl-L-methionine = 2'-O-methyluridine(2552) in 23S rRNA + S-adenosyl-L-homocysteine + H(+). Specifically methylates the uridine in position 2552 of 23S rRNA at the 2'-O position of the ribose in the fully assembled 50S ribosomal subunit. This chain is Ribosomal RNA large subunit methyltransferase E, found in Rhodospirillum rubrum (strain ATCC 11170 / ATH 1.1.1 / DSM 467 / LMG 4362 / NCIMB 8255 / S1).